Reading from the N-terminus, the 149-residue chain is Nucleoside diphosphate kinase (149 aa).

The ATP site is built by Lys9, Phe57, Arg85, Thr91, Arg102, and Asn112. The Pros-phosphohistidine intermediate role is filled by His115.

The protein belongs to the NDK family. In terms of assembly, homotetramer. Mg(2+) is required as a cofactor.

The protein resides in the cytoplasm. It catalyses the reaction a 2'-deoxyribonucleoside 5'-diphosphate + ATP = a 2'-deoxyribonucleoside 5'-triphosphate + ADP. The catalysed reaction is a ribonucleoside 5'-diphosphate + ATP = a ribonucleoside 5'-triphosphate + ADP. In terms of biological role, major role in the synthesis of nucleoside triphosphates other than ATP. The ATP gamma phosphate is transferred to the NDP beta phosphate via a ping-pong mechanism, using a phosphorylated active-site intermediate. This is Nucleoside diphosphate kinase from Staphylococcus aureus (strain MSSA476).